An 81-amino-acid chain; its full sequence is RNA-binding protein Hfq (81 aa).

One can recognise a Sm domain in the interval D11–I71.

Belongs to the Hfq family. As to quaternary structure, homohexamer.

In terms of biological role, RNA chaperone that binds small regulatory RNA (sRNAs) and mRNAs to facilitate mRNA translational regulation in response to envelope stress, environmental stress and changes in metabolite concentrations. Also binds with high specificity to tRNAs. This chain is RNA-binding protein Hfq, found in Clostridium beijerinckii (strain ATCC 51743 / NCIMB 8052) (Clostridium acetobutylicum).